A 64-amino-acid polypeptide reads, in one-letter code: Large ribosomal subunit protein bL35 (64 aa).

Disordered stretches follow at residues methionine 1–isoleucine 22 and glutamate 34–glycine 64. The span at glutamate 34–glycine 46 shows a compositional bias: basic and acidic residues. Residues valine 50–glycine 64 are compositionally biased toward polar residues.

It belongs to the bacterial ribosomal protein bL35 family.

This chain is Large ribosomal subunit protein bL35, found in Mycolicibacterium paratuberculosis (strain ATCC BAA-968 / K-10) (Mycobacterium paratuberculosis).